The chain runs to 214 residues: uncharacterized protein (214 aa).

5 helical membrane-spanning segments follow: residues L18 to V38, D51 to G71, I80 to V100, L108 to V128, and F145 to I165.

It localises to the cell membrane. This is an uncharacterized protein from Geobacillus stearothermophilus (Bacillus stearothermophilus).